The sequence spans 337 residues: Adenylosuccinate synthetase (337 aa).

Residues 12 to 18 (GDEGKGK) and 42 to 44 (GHT) contribute to the GTP site. The Proton acceptor role is filled by Asp-13. Mg(2+) contacts are provided by Asp-13 and Gly-42. Residues 13–16 (DEGK), 40–43 (NAGH), Thr-124, Arg-138, Gln-176, Thr-191, and Arg-253 contribute to the IMP site. Residue His-43 is the Proton donor of the active site. 249–255 (TVTGRRR) serves as a coordination point for substrate. GTP is bound by residues Arg-255, 281 to 283 (GVD), and 321 to 323 (STG).

The protein belongs to the adenylosuccinate synthetase family. In terms of assembly, homodimer. Requires Mg(2+) as cofactor.

It localises to the cytoplasm. The enzyme catalyses IMP + L-aspartate + GTP = N(6)-(1,2-dicarboxyethyl)-AMP + GDP + phosphate + 2 H(+). Its pathway is purine metabolism; AMP biosynthesis via de novo pathway; AMP from IMP: step 1/2. Plays an important role in the de novo pathway of purine nucleotide biosynthesis. Catalyzes the first committed step in the biosynthesis of AMP from IMP. The sequence is that of Adenylosuccinate synthetase from Archaeoglobus fulgidus (strain ATCC 49558 / DSM 4304 / JCM 9628 / NBRC 100126 / VC-16).